The sequence spans 236 residues: Protein-S-isoprenylcysteine O-methyltransferase (236 aa).

4 helical membrane passes run 3-23 (NLHT…LGCV), 24-44 (FGLG…FFAF), 76-96 (AYWL…GKSF), and 108-128 (FLIN…LCLG). S-adenosyl-L-methionine-binding positions include 155–158 (HLLV), Y163, and 168–171 (HPSY). The chain crosses the membrane as a helical span at residues 174–194 (FFIWALGTQMLLGNFVSTLLF). R205 provides a ligand contact to substrate. E209 serves as a coordination point for S-adenosyl-L-methionine.

It belongs to the class VI-like SAM-binding methyltransferase superfamily. Isoprenylcysteine carboxyl methyltransferase family.

The protein localises to the membrane. It carries out the reaction [protein]-C-terminal S-[(2E,6E)-farnesyl]-L-cysteine + S-adenosyl-L-methionine = [protein]-C-terminal S-[(2E,6E)-farnesyl]-L-cysteine methyl ester + S-adenosyl-L-homocysteine. Its function is as follows. Mediates C-terminal methylation of the isoprenylated C-terminal cysteine in M-factor. The sequence is that of Protein-S-isoprenylcysteine O-methyltransferase (mam4) from Schizosaccharomyces pombe (strain 972 / ATCC 24843) (Fission yeast).